A 681-amino-acid polypeptide reads, in one-letter code: Chaperone protein HtpG (681 aa).

Positions 1 to 326 are a; substrate-binding; the sequence is MQKGNIGVTT…SPDIPLNVSR (326 aa). A b region spans residues 327 to 545; the sequence is SYLQSDSNVK…YMRRMKEMAN (219 aa). Residues 546–681 form a c region; that stretch reads IQAGMSFYGE…NFVKRSIELI (136 aa). The tract at residues 589 to 620 is disordered; sequence IQTEMNSVSKRRNELKDSQKDKKEEDIPTAEK. Residues 599–620 show a composition bias toward basic and acidic residues; that stretch reads RRNELKDSQKDKKEEDIPTAEK.

This sequence belongs to the heat shock protein 90 family. As to quaternary structure, homodimer.

It is found in the cytoplasm. Functionally, molecular chaperone. Has ATPase activity. This is Chaperone protein HtpG from Bacteroides thetaiotaomicron (strain ATCC 29148 / DSM 2079 / JCM 5827 / CCUG 10774 / NCTC 10582 / VPI-5482 / E50).